Here is a 419-residue protein sequence, read N- to C-terminus: Putative zinc metalloprotease spyM18_2031 (419 aa).

His-18 provides a ligand contact to Zn(2+). Glu-19 is an active-site residue. His-22 lines the Zn(2+) pocket. 4 helical membrane passes run 169–191 (LITN…ILLV), 301–323 (LAWS…FSLN), 343–365 (LESV…LIPI), and 392–411 (AYIT…AVTW). A PDZ domain is found at 175–274 (GPMNNFILGI…LKTVAVKPQK (100 aa)).

The protein belongs to the peptidase M50B family. Zn(2+) serves as cofactor.

It localises to the cell membrane. This Streptococcus pyogenes serotype M18 (strain MGAS8232) protein is Putative zinc metalloprotease spyM18_2031.